A 344-amino-acid chain; its full sequence is MSESEAEETKISTEPVDNAWAMKIPTFRQEDNPHGVVEESSFATLFPKYRERYLKEVWPLVEQCLSEHHLKAELDLMEGSMVVKTSRKTWDPYIIIKARDMIKLMARSVPFEQAKRVLQDDIGCDIIKIGNLVHKKEKFVKRRQRLIGPNGATLKSIELLTDCYVLVQGNTVSALGPYKGLQQVRDIVLETMNNVHPIYNIKALMIKRELMKDPRLANEDWSRFLPKFKNKNISKRKQPKVKKQKKEYTPFPPSQPESKVDKQLASGEYFLNQEQKQAKRNQGRTEKQKEAAKRQDERRNKDFVPPTEESAASSRKKEDGSSTKVDVKALKAKLIKANKKAKSS.

Positions 125 to 193 (DIIKIGNLVH…VRDIVLETMN (69 aa)) constitute a KH domain. Over residues 232-245 (NISKRKQPKVKKQK) the composition is skewed to basic residues. Disordered stretches follow at residues 232–260 (NISK…ESKV) and 273–326 (QEQK…TKVD). The stretch at 270 to 295 (FLNQEQKQAKRNQGRTEKQKEAAKRQ) forms a coiled coil. 2 stretches are compositionally biased toward basic and acidic residues: residues 283–302 (GRTE…RNKD) and 315–326 (RKKEDGSSTKVD).

It belongs to the KRR1 family. Monomer. Component of the ribosomal small subunit (SSU) processome.

Its subcellular location is the nucleus. It is found in the nucleolus. Required for 40S ribosome biogenesis. Involved in nucleolar processing of pre-18S ribosomal RNA and ribosome assembly. Binds to RNA. Required for female germline development, cell viability during eye development and for survival of dividing cells and epithelial cells during early wing disk development. The polypeptide is KRR1 small subunit processome component homolog (Drosophila yakuba (Fruit fly)).